The following is a 372-amino-acid chain: tRNA-specific 2-thiouridylase MnmA (372 aa).

ATP contacts are provided by residues 16 to 23 and Met-42; that span reads GMSGGVDS. An interaction with target base in tRNA region spans residues 102 to 104; it reads NPD. The Nucleophile role is filled by Cys-107. A disulfide bridge links Cys-107 with Cys-205. Gly-132 contacts ATP. The tract at residues 155-157 is interaction with tRNA; the sequence is KDQ. The Cysteine persulfide intermediate role is filled by Cys-205. Residues 317-318 are interaction with tRNA; it reads RY.

This sequence belongs to the MnmA/TRMU family.

The protein localises to the cytoplasm. The catalysed reaction is S-sulfanyl-L-cysteinyl-[protein] + uridine(34) in tRNA + AH2 + ATP = 2-thiouridine(34) in tRNA + L-cysteinyl-[protein] + A + AMP + diphosphate + H(+). Functionally, catalyzes the 2-thiolation of uridine at the wobble position (U34) of tRNA, leading to the formation of s(2)U34. The protein is tRNA-specific 2-thiouridylase MnmA of Shewanella baltica (strain OS223).